The sequence spans 351 residues: Cyanuric acid amidohydrolase (351 aa).

Residues 1 to 96 (MPSLRAHVFR…HWTVFARETV (96 aa)) form an RU A region. Substrate-binding positions include R53 and 77 to 78 (SG). An RU B region spans residues 103–240 (ALAIGVSRTP…HEIIVLGMSA (138 aa)). Residue K153 is part of the active site. Substrate contacts are provided by residues R185 and 223 to 224 (SS). S223 functions as the Nucleophile in the catalytic mechanism. Residues 246–351 (LSIDHAVMLD…PVAIIVEKEQ (106 aa)) form an RU C region. E283 contributes to the Mg(2+) binding site. Residues R310 and 329–330 (SG) contribute to the substrate site. Mg(2+) is bound by residues A332, Q335, G336, P337, and G340.

It belongs to the cyclic amide hydrolase (CyAH) family. In terms of assembly, homotetramer.

The enzyme catalyses cyanurate + H2O = 1-carboxybiuret + H(+). The protein operates within xenobiotic degradation; atrazine degradation; biuret from cyanurate: step 1/1. With respect to regulation, inhibited by barbituric acid. Functionally, responsible for the hydrolysis of cyanuric acid, an intermediate formed during catabolism of s-triazine based compounds in herbicides such as atrazine and polymers such as melamine. Catalyzes the hydrolytic opening of the s-triazine ring of cyanuric acid (2,4,6-trihydroxy-s-triazine) to yield carbon dioxide and carboxybiuret, which spontaneously decarboxylates to biuret. The protein is Cyanuric acid amidohydrolase of Rhizobium leguminosarum bv. trifolii (strain WSM1325).